Consider the following 2049-residue polypeptide: Polyunsaturated fatty acid synthase subunit B (2049 aa).

Ketosynthase family 3 (KS3) domains lie at 15-442 (EKRI…VFEE) and 468-908 (NMRI…LLSD). Residues Cys-196, His-333, and His-368 each act as for beta-ketoacyl synthase 1 activity in the active site. Residues 467–984 (NNMRIAITGM…LGETLAQEAD (518 aa)) form a chain length factor (CLF) domain region. The tract at residues 1044–1377 (RVAFMYGEGR…QRSHVTGAMD (334 aa)) is acyltransferase (AT) domain. The interval 1500–1531 (NKDNQPAVAPAATAAPTPKPKPAASSGKPVPS) is disordered. Over residues 1505–1531 (PAVAPAATAAPTPKPKPAASSGKPVPS) the composition is skewed to low complexity. The enoyl reductase (ER) domain stretch occupies residues 1579–1887 (SRAFMKTYGV…SRANKLYELF (309 aa)).

In terms of assembly, component of the polyunsaturated fatty acid synthase complex composed of at least ORF-A, ORF-B and ORF-C.

It participates in lipid metabolism; fatty acid biosynthesis. In terms of biological role, poliketide synthase-like protein; part of the polyunsaturated fatty acid synthase composed of the 3 PKS-like subunits A, B and C. While the saturated fatty acids (SFAs) in Thraustochytrium are produced by the conventional fatty acid synthase (FAS) pathway, polyunsaturated fatty acids (PUFAs) including docosahexeanoic acid (DHA) and docosapentaenoic acid (DPA) are synthesized via an anaerobical PKS pathway. PUFA synthase assimilates fatty acyl-CoA, the product of FAS, as the starter unit to synthesize DPA, and this starter unit may be butyryl-CoA, hexanoyl-CoA, or octanoyl-CoA. DPA and DHA biosynthesis seem to differ by the reduction at the N-3 position by PUFA synthase, not the extension of carbon chain. In DHA biosynthesis, PUFA synthase extends the fatty acyl chain from the methyl toward the carboxyl end, and the double bond is formed when the carbon chain is growing, instead of afterward. Therefore, PUFA synthase is unable to transform DPA to DHA, suggesting that DPA is not the precursor of DHA. Moreover, DPA molecule is partly extended by FAS KS domain, so DPA biosynthesis is less dependent on PUFA synthase KS domain than DHA. The protein is Polyunsaturated fatty acid synthase subunit B of Thraustochytrium sp. (strain ATCC 26185 / S-3).